We begin with the raw amino-acid sequence, 119 residues long: MFVKSTTRHIRIYAAEVHNSELVESDNMLTLDVDPDNEFNWDEDALQKVYRKFDELVEAASGEELSDYNLRRIGSDLEHFVRNLLQNGEISYNLKSRVLNYSMGLPKVESPETEGAYNL.

It belongs to the complex I NdhM subunit family. As to quaternary structure, NDH-1 can be composed of about 15 different subunits; different subcomplexes with different compositions have been identified which probably have different functions.

It is found in the cellular thylakoid membrane. The catalysed reaction is a plastoquinone + NADH + (n+1) H(+)(in) = a plastoquinol + NAD(+) + n H(+)(out). It carries out the reaction a plastoquinone + NADPH + (n+1) H(+)(in) = a plastoquinol + NADP(+) + n H(+)(out). NDH-1 shuttles electrons from an unknown electron donor, via FMN and iron-sulfur (Fe-S) centers, to quinones in the respiratory and/or the photosynthetic chain. The immediate electron acceptor for the enzyme in this species is believed to be plastoquinone. Couples the redox reaction to proton translocation, and thus conserves the redox energy in a proton gradient. Cyanobacterial NDH-1 also plays a role in inorganic carbon-concentration. This chain is NAD(P)H-quinone oxidoreductase subunit M, found in Crocosphaera subtropica (strain ATCC 51142 / BH68) (Cyanothece sp. (strain ATCC 51142)).